The primary structure comprises 96 residues: Aspartyl/glutamyl-tRNA(Asn/Gln) amidotransferase subunit C (96 aa).

The protein belongs to the GatC family. As to quaternary structure, heterotrimer of A, B and C subunits.

It carries out the reaction L-glutamyl-tRNA(Gln) + L-glutamine + ATP + H2O = L-glutaminyl-tRNA(Gln) + L-glutamate + ADP + phosphate + H(+). The catalysed reaction is L-aspartyl-tRNA(Asn) + L-glutamine + ATP + H2O = L-asparaginyl-tRNA(Asn) + L-glutamate + ADP + phosphate + 2 H(+). In terms of biological role, allows the formation of correctly charged Asn-tRNA(Asn) or Gln-tRNA(Gln) through the transamidation of misacylated Asp-tRNA(Asn) or Glu-tRNA(Gln) in organisms which lack either or both of asparaginyl-tRNA or glutaminyl-tRNA synthetases. The reaction takes place in the presence of glutamine and ATP through an activated phospho-Asp-tRNA(Asn) or phospho-Glu-tRNA(Gln). This Oceanobacillus iheyensis (strain DSM 14371 / CIP 107618 / JCM 11309 / KCTC 3954 / HTE831) protein is Aspartyl/glutamyl-tRNA(Asn/Gln) amidotransferase subunit C.